A 405-amino-acid polypeptide reads, in one-letter code: Arginine biosynthesis bifunctional protein ArgJ, mitochondrial (405 aa).

Substrate contacts are provided by threonine 174, lysine 200, threonine 211, and glutamate 300. Threonine 211 functions as the Nucleophile in the catalytic mechanism.

Belongs to the ArgJ family. In terms of assembly, heterodimer of an alpha and a beta chain. Post-translationally, the alpha and beta chains are autoproteolytically processed from a single precursor protein within the mitochondrion.

It localises to the mitochondrion matrix. It carries out the reaction N(2)-acetyl-L-ornithine + L-glutamate = N-acetyl-L-glutamate + L-ornithine. It catalyses the reaction L-glutamate + acetyl-CoA = N-acetyl-L-glutamate + CoA + H(+). It functions in the pathway amino-acid biosynthesis; L-arginine biosynthesis; L-ornithine and N-acetyl-L-glutamate from L-glutamate and N(2)-acetyl-L-ornithine (cyclic): step 1/1. It participates in amino-acid biosynthesis; L-arginine biosynthesis; N(2)-acetyl-L-ornithine from L-glutamate: step 1/4. Its function is as follows. Catalyzes two activities which are involved in the cyclic version of arginine biosynthesis: the synthesis of acetylglutamate from glutamate and acetyl-CoA, and of ornithine by transacetylation between acetylornithine and glutamate. The chain is Arginine biosynthesis bifunctional protein ArgJ, mitochondrial from Candida tropicalis (strain ATCC MYA-3404 / T1) (Yeast).